The chain runs to 362 residues: Peptide chain release factor 1 (362 aa).

Residue glutamine 237 is modified to N5-methylglutamine.

It belongs to the prokaryotic/mitochondrial release factor family. Methylated by PrmC. Methylation increases the termination efficiency of RF1.

It localises to the cytoplasm. Peptide chain release factor 1 directs the termination of translation in response to the peptide chain termination codons UAG and UAA. In Aeromonas salmonicida (strain A449), this protein is Peptide chain release factor 1.